Here is an 88-residue protein sequence, read N- to C-terminus: Putative septation protein SpoVG (88 aa).

It belongs to the SpoVG family.

Functionally, could be involved in septation. The polypeptide is Putative septation protein SpoVG (Caldicellulosiruptor saccharolyticus (strain ATCC 43494 / DSM 8903 / Tp8T 6331)).